We begin with the raw amino-acid sequence, 352 residues long: Phenylalanine--tRNA ligase alpha subunit (352 aa).

E258 serves as a coordination point for Mg(2+).

The protein belongs to the class-II aminoacyl-tRNA synthetase family. Phe-tRNA synthetase alpha subunit type 1 subfamily. In terms of assembly, tetramer of two alpha and two beta subunits. The cofactor is Mg(2+).

Its subcellular location is the cytoplasm. It carries out the reaction tRNA(Phe) + L-phenylalanine + ATP = L-phenylalanyl-tRNA(Phe) + AMP + diphosphate + H(+). This chain is Phenylalanine--tRNA ligase alpha subunit, found in Staphylococcus aureus (strain NCTC 8325 / PS 47).